A 374-amino-acid chain; its full sequence is MKPALTLHDRTLKLNRFPIRKIETLQAWDAADEYLINHTHDMELDPQRPILILNDSFGALSCWFAERANVTTVTDSFVAKQGCIANLTANQLPSVNIIDCLAELPKNPQLVLIKLPKNNRLLTWQLQQLCHLLPEDCRVIGAAKVKDIHTSTLKLCDKYLGETKTSLAVKKARLVFIKPNASLAKPMPEAKAWDVPEHGIRLSNHANVFSGESLDIGARLLLNHIPQDFKYKDIIDLGCGNGVIGIKAARRNPQAKITCVDESFMAAASCTENAKQNLEAPEQLTAIVTDCLADIEHSSADLVLCNPPFHQQTTITDHIAWQMFCDAKQVLRPKGELIVIGNRQLGYDDKLKRLFGNVEIIAQNDKFIVYQSVK.

Belongs to the methyltransferase superfamily. RlmG family.

It localises to the cytoplasm. It carries out the reaction guanosine(1835) in 23S rRNA + S-adenosyl-L-methionine = N(2)-methylguanosine(1835) in 23S rRNA + S-adenosyl-L-homocysteine + H(+). Specifically methylates the guanine in position 1835 (m2G1835) of 23S rRNA. This Photobacterium profundum (strain SS9) protein is Ribosomal RNA large subunit methyltransferase G.